Here is a 436-residue protein sequence, read N- to C-terminus: uncharacterized protein (436 aa).

This is an uncharacterized protein from Diadromus pulchellus (Parasitic wasp).